The primary structure comprises 1567 residues: Ice nucleation protein (1567 aa).

The span at 130-185 (PAAEPSAPATQATSATLPTPATPSTQATPSTQSTQSTQSTEATQSTEATPVATVAA) shows a compositional bias: low complexity. 13 disordered regions span residues 130–195 (PAAE…QQHD), 270–329 (YGST…KGSD), 356–378 (AGSESSLTAGYGSTQTARKGSDV), 449–474 (TQTSGSDSSLTAGYGSTQTARKGSDI), 502–529 (SESSLTAGYGSTQTAQQDSSLTTGYGST), 594–620 (QTAGSDSSLTAGYGSTQTAREGSDVTA), 642–668 (QTSGSDSSLTAGYGSTQTARKGSDVTA), 689–716 (TQTSGSDSSLTAGYGSTQTARKGSDVTA), 738–764 (QTSGSDSSLTAGYGSTQTARKGSDVTA), 785–810 (TQTSGSDSSLTAGYGSTQTARKGSDI), 833–860 (TQTSGSDSSLTAGYGSTQTAREGSDVTA), 929–959 (TQTSGSDSSLTAGYGSTQTARKGSDMTAGYG), and 977–1004 (TQTSGSDSSLTAGYGSTQTAREGSDVTA). Polar residues predominate over residues 270–282 (YGSTQTAQEGSRL). Low complexity predominate over residues 283-296 (TSGYGSTATSGSDS). Composition is skewed to polar residues over residues 302–325 (YGSTQTAGSESSLTAGYGSTQTAR), 356–373 (AGSESSLTAGYGSTQTAR), 449–469 (TQTSGSDSSLTAGYGSTQTAR), and 502–519 (SESSLTAGYGSTQTAQQD). Low complexity predominate over residues 520 to 529 (SSLTTGYGST). Polar residues-rich tracts occupy residues 594–613 (QTAGSDSSLTAGYGSTQTAR), 642–661 (QTSGSDSSLTAGYGSTQTAR), 689–709 (TQTSGSDSSLTAGYGSTQTAR), 738–757 (QTSGSDSSLTAGYGSTQTAR), 785–805 (TQTSGSDSSLTAGYGSTQTAR), 833–853 (TQTSGSDSSLTAGYGSTQTAR), 929–949 (TQTSGSDSSLTAGYGSTQTAR), and 977–997 (TQTSGSDSSLTAGYGSTQTAR).

The protein belongs to the bacterial ice nucleation protein family.

Its subcellular location is the cell outer membrane. Functionally, ice nucleation proteins enable bacteria to nucleate crystallization in supercooled water. This Xanthomonas campestris pv. translucens protein is Ice nucleation protein (inaX).